Consider the following 54-residue polypeptide: Ovomucoid (54 aa).

The region spanning 4-54 (VDCSDYPKPVCSLDYMPLCGSDNTTYNNKCIFCNAVVDSNGTITLSHFGKC) is the Kazal-like domain. Cystine bridges form between C6/C36, C14/C33, and C22/C54. N43 is a glycosylation site (N-linked (GlcNAc...) asparagine).

The protein resides in the secreted. The protein is Ovomucoid of Haemorhous mexicanus (House finch).